Here is a 172-residue protein sequence, read N- to C-terminus: Resuscitation-promoting factor RpfE (172 aa).

The signal sequence occupies residues methionine 1 to alanine 28. The disordered stretch occupies residues leucine 33 to glutamate 89. Residues asparagine 49–proline 65 are compositionally biased toward pro residues.

The protein belongs to the transglycosylase family. Rpf subfamily. Interacts with RipA.

Functionally, factor that stimulates resuscitation of dormant cells. Has peptidoglycan (PG) hydrolytic activity. Active in the pM concentration range. Has little to no effect on actively-growing cells. PG fragments could either directly activate the resuscitation pathway of dormant bacteria or serve as a substrate for endogenous Rpf, resulting in low molecular weight products with resuscitation activity. Its function is as follows. Stimulates growth of stationary phase M.bovis (a slow-growing Mycobacterium), reduces the lag phase of diluted fast-growers M.smegmatis and Micrococcus luteus. Sequential gene disruption indicates RpfB and RpfE are higher than RpfD and RpfC in functional hierarchy. This is Resuscitation-promoting factor RpfE (rpfE) from Mycobacterium tuberculosis (strain ATCC 25618 / H37Rv).